The primary structure comprises 496 residues: Glutamate--tRNA ligase (496 aa).

The short motif at 12 to 22 (PSPTGHLHIGN) is the 'HIGH' region element. A 'KMSKS' region motif is present at residues 259–263 (KLSKR). Lys262 provides a ligand contact to ATP.

The protein belongs to the class-I aminoacyl-tRNA synthetase family. Glutamate--tRNA ligase type 1 subfamily. As to quaternary structure, monomer.

The protein localises to the cytoplasm. It catalyses the reaction tRNA(Glu) + L-glutamate + ATP = L-glutamyl-tRNA(Glu) + AMP + diphosphate. In terms of biological role, catalyzes the attachment of glutamate to tRNA(Glu) in a two-step reaction: glutamate is first activated by ATP to form Glu-AMP and then transferred to the acceptor end of tRNA(Glu). The chain is Glutamate--tRNA ligase from Lactiplantibacillus plantarum (strain ATCC BAA-793 / NCIMB 8826 / WCFS1) (Lactobacillus plantarum).